A 134-amino-acid chain; its full sequence is Putative membrane protein insertion efficiency factor (134 aa).

Belongs to the UPF0161 family.

The protein localises to the cell inner membrane. Could be involved in insertion of integral membrane proteins into the membrane. The sequence is that of Putative membrane protein insertion efficiency factor from Rhizobium etli (strain ATCC 51251 / DSM 11541 / JCM 21823 / NBRC 15573 / CFN 42).